We begin with the raw amino-acid sequence, 275 residues long: Glutamate racemase (275 aa).

Residues D10–S11 and Y42–G43 each bind substrate. The active-site Proton donor/acceptor is the C74. N75 to T76 is a binding site for substrate. Catalysis depends on C189, which acts as the Proton donor/acceptor. Residue T190–H191 participates in substrate binding.

Belongs to the aspartate/glutamate racemases family.

The enzyme catalyses L-glutamate = D-glutamate. The protein operates within cell wall biogenesis; peptidoglycan biosynthesis. Functionally, provides the (R)-glutamate required for cell wall biosynthesis. The sequence is that of Glutamate racemase from Bartonella tribocorum (strain CIP 105476 / IBS 506).